The sequence spans 179 residues: Large ribosomal subunit protein uL5 (179 aa).

Belongs to the universal ribosomal protein uL5 family. In terms of assembly, part of the 50S ribosomal subunit; part of the 5S rRNA/L5/L18/L25 subcomplex. Contacts the 5S rRNA and the P site tRNA. Forms a bridge to the 30S subunit in the 70S ribosome.

In terms of biological role, this is one of the proteins that bind and probably mediate the attachment of the 5S RNA into the large ribosomal subunit, where it forms part of the central protuberance. In the 70S ribosome it contacts protein S13 of the 30S subunit (bridge B1b), connecting the 2 subunits; this bridge is implicated in subunit movement. Contacts the P site tRNA; the 5S rRNA and some of its associated proteins might help stabilize positioning of ribosome-bound tRNAs. The sequence is that of Large ribosomal subunit protein uL5 from Geobacillus thermodenitrificans (strain NG80-2).